A 579-amino-acid polypeptide reads, in one-letter code: Trehalase (579 aa).

A signal peptide spans 1–15 (MRLFLLLVGLTTVIA). 2 N-linked (GlcNAc...) asparagine glycosylation sites follow: Asn29 and Asn58. Residues Arg161, 168-169 (WD), Asn205, 214-216 (RSQ), 279-281 (RPE), and Gly313 contribute to the substrate site. Asn205 carries an N-linked (GlcNAc...) asparagine glycan. Asp315 (proton donor/acceptor) is an active-site residue. Asn331 carries N-linked (GlcNAc...) asparagine glycosylation. The active-site Proton donor/acceptor is the Glu513. Glu528 contributes to the substrate binding site. Residues 560–569 (DASANNGQSN) show a composition bias toward polar residues. Residues 560-579 (DASANNGQSNEESETDSKEK) form a disordered region.

Belongs to the glycosyl hydrolase 37 family. In terms of tissue distribution, in midgut and Malpighian tubules.

It is found in the basolateral cell membrane. It catalyses the reaction alpha,alpha-trehalose + H2O = alpha-D-glucose + beta-D-glucose. Functionally, involved in uptake of hemolymph trehalose into epithelial cells in the midgut of feeding larvae. This Bombyx mori (Silk moth) protein is Trehalase.